The chain runs to 145 residues: UPF0260 protein VS_0923 (145 aa).

It belongs to the UPF0260 family.

The polypeptide is UPF0260 protein VS_0923 (Vibrio atlanticus (strain LGP32) (Vibrio splendidus (strain Mel32))).